The sequence spans 435 residues: MKLYDTLTKTNVDIDANEINIYVCGPTVYDHIHIGNLRPIVTFDVLRRLLEHSNKKVNFVHNLTDIDDKIINQAQRLNLSEEEVTKRYTSAYFEILDELNIKLPKIVKVTDVMSGIIKYIEKIYDKQYAYELDGDIYFDTTRIADYGVLSKRKLDEQISGIRVKSNENKTSPNDFVLWKKTVEGIKWNSRFGLGRPGWHTECAYIIDQEFKQKGFVIHGGGIDLVFPHHENENAQNLALHNKNLVNCWVHVGYLLIDNEKMSKSLNNFIYVKHLIESHNYRAIRWVFYNTAHTQPLNFDGTIIKAAQKDVEKIISTVNRFRTFLIANKNNIPSSSLVCEEFKKALFDNLNFANATKVIWDLIKVLNESIAYKKIDENIWAYQQLIWCLEIYGIVPDMIHNEQIIDQINQWSELLNNKDYEKADSIRNKLINKKVL.

Position 24 (Cys-24) interacts with Zn(2+). Positions 26–36 (PTVYDHIHIGN) match the 'HIGH' region motif. Zn(2+)-binding residues include Cys-202, His-228, and Glu-232. The 'KMSKS' region signature appears at 260–264 (KMSKS). Lys-263 lines the ATP pocket.

The protein belongs to the class-I aminoacyl-tRNA synthetase family. As to quaternary structure, monomer. Zn(2+) serves as cofactor.

It localises to the cytoplasm. It catalyses the reaction tRNA(Cys) + L-cysteine + ATP = L-cysteinyl-tRNA(Cys) + AMP + diphosphate. This is Cysteine--tRNA ligase from Mycoplasmoides gallisepticum (strain R(low / passage 15 / clone 2)) (Mycoplasma gallisepticum).